A 624-amino-acid polypeptide reads, in one-letter code: (-)-beta-phellandrene synthase 2, chloroplastic (624 aa).

A chloroplast-targeting transit peptide spans Met-1 to Arg-47. 3 residues coordinate Mg(2+): Asp-375, Asp-379, and Asp-527. Positions Asp-375–Asp-379 match the DDXXD motif motif.

Belongs to the terpene synthase family. Tpsd subfamily. It depends on Mg(2+) as a cofactor. Mn(2+) is required as a cofactor.

Its subcellular location is the plastid. The protein localises to the chloroplast. The enzyme catalyses (2E)-geranyl diphosphate = (-)-beta-phellandrene + diphosphate. It functions in the pathway terpene metabolism; oleoresin biosynthesis. The protein operates within secondary metabolite biosynthesis; terpenoid biosynthesis. In terms of biological role, monoterpene synthase (TPS) involved in the biosynthesis of monoterpene natural products included in conifer oleoresin secretions and volatile emissions; these compounds contribute to biotic and abiotic stress defense against herbivores and pathogens. Catalyzes the conversion of (2E)-geranyl diphosphate (GPP) to (-)-beta-phellandrene. The protein is (-)-beta-phellandrene synthase 2, chloroplastic of Pinus contorta (Shore pine).